A 100-amino-acid chain; its full sequence is Putative antiporter subunit mnhF2 (100 aa).

The next 3 helical transmembrane spans lie at 5 to 25, 38 to 60, and 65 to 87; these read FTQI…LVCL, VVSF…VIFN, and LDSI…RFIG.

It belongs to the CPA3 antiporters (TC 2.A.63) subunit F family. May form a heterooligomeric complex that consists of seven subunits: mnhA2, mnhB2, mnhC2, mnhD2, mnhE2, mnhF2 and mnhG2.

It is found in the cell membrane. This is Putative antiporter subunit mnhF2 (mnhF2) from Staphylococcus epidermidis (strain ATCC 35984 / DSM 28319 / BCRC 17069 / CCUG 31568 / BM 3577 / RP62A).